The primary structure comprises 70 residues: Large ribosomal subunit protein bL31 (70 aa).

Positions 16, 18, 37, and 40 each coordinate Zn(2+).

It belongs to the bacterial ribosomal protein bL31 family. Type A subfamily. As to quaternary structure, part of the 50S ribosomal subunit. Zn(2+) serves as cofactor.

Binds the 23S rRNA. The protein is Large ribosomal subunit protein bL31 of Klebsiella pneumoniae (strain 342).